A 163-amino-acid polypeptide reads, in one-letter code: Ribonuclease P protein subunit p25-like protein (163 aa).

Disordered regions lie at residues 1 to 24 (MEQY…LPPD) and 126 to 163 (LDPS…DTRS). Residues 153 to 163 (RPRRRARDTRS) are compositionally biased toward basic residues.

The protein belongs to the histone-like Alba family.

The protein localises to the nucleus. Functionally, may be a component of ribonuclease P or MRP. This is Ribonuclease P protein subunit p25-like protein (Rpp25l) from Mus musculus (Mouse).